We begin with the raw amino-acid sequence, 256 residues long: Enolase-phosphatase E1 (256 aa).

Residues Asp13 and Glu15 each coordinate Mg(2+). Residues 127-128 (SS) and Lys175 each bind substrate. Asp202 serves as a coordination point for Mg(2+).

The protein belongs to the HAD-like hydrolase superfamily. MasA/MtnC family. As to quaternary structure, monomer. Mg(2+) is required as a cofactor.

Its subcellular location is the cytoplasm. It is found in the nucleus. The enzyme catalyses 5-methylsulfanyl-2,3-dioxopentyl phosphate + H2O = 1,2-dihydroxy-5-(methylsulfanyl)pent-1-en-3-one + phosphate. It participates in amino-acid biosynthesis; L-methionine biosynthesis via salvage pathway; L-methionine from S-methyl-5-thio-alpha-D-ribose 1-phosphate: step 3/6. Its pathway is amino-acid biosynthesis; L-methionine biosynthesis via salvage pathway; L-methionine from S-methyl-5-thio-alpha-D-ribose 1-phosphate: step 4/6. Functionally, bifunctional enzyme that catalyzes the enolization of 2,3-diketo-5-methylthiopentyl-1-phosphate (DK-MTP-1-P) into the intermediate 2-hydroxy-3-keto-5-methylthiopentenyl-1-phosphate (HK-MTPenyl-1-P), which is then dephosphorylated to form the acireductone 1,2-dihydroxy-3-keto-5-methylthiopentene (DHK-MTPene). The sequence is that of Enolase-phosphatase E1 (utr4) from Botryotinia fuckeliana (strain B05.10) (Noble rot fungus).